The sequence spans 255 residues: uncharacterized protein (255 aa).

A signal peptide spans 1–23 (MKRLNKLVLGINLLFLVISITAG). Residue Cys24 is the site of N-palmitoyl cysteine attachment. Residue Cys24 is the site of S-diacylglycerol cysteine attachment.

It belongs to the staphylococcal tandem lipoprotein family.

The protein localises to the cell membrane. This is an uncharacterized protein from Staphylococcus aureus (strain MRSA252).